The sequence spans 257 residues: Cytosolic Fe-S cluster assembly factor NUBP2 homolog (257 aa).

14–21 (GKGGVGKS) contributes to the ATP binding site. Residues Cys188 and Cys191 each coordinate [4Fe-4S] cluster.

Belongs to the Mrp/NBP35 ATP-binding proteins family. NUBP2/CFD1 subfamily. Heterotetramer of 2 NUBP1 and 2 NUBP2 chains. The cofactor is [4Fe-4S] cluster.

The protein resides in the cytoplasm. In terms of biological role, component of the cytosolic iron-sulfur (Fe/S) protein assembly (CIA) machinery. Required for maturation of extramitochondrial Fe-S proteins. The NUBP1-NUBP2 heterotetramer forms a Fe-S scaffold complex, mediating the de novo assembly of an Fe-S cluster and its transfer to target apoproteins. The polypeptide is Cytosolic Fe-S cluster assembly factor NUBP2 homolog (Culex quinquefasciatus (Southern house mosquito)).